The sequence spans 105 residues: Putative toxin MazF8 (105 aa).

In terms of assembly, forms a complex with cognate antitoxin MazE8.

Putative toxic component of a type II toxin-antitoxin (TA) system. Acts as an endoribonuclease. Neutralized by coexpression with cognate antitoxin MazE8. This Mycobacterium tuberculosis (strain CDC 1551 / Oshkosh) protein is Putative toxin MazF8 (mazF8).